Reading from the N-terminus, the 511-residue chain is Maturase K (511 aa).

Belongs to the intron maturase 2 family. MatK subfamily.

Its subcellular location is the plastid. The protein resides in the chloroplast. Usually encoded in the trnK tRNA gene intron. Probably assists in splicing its own and other chloroplast group II introns. This is Maturase K from Oryza nivara (Indian wild rice).